Reading from the N-terminus, the 686-residue chain is X-linked interleukin-1 receptor accessory protein-like 2 (686 aa).

The N-terminal stretch at 1-16 is a signal peptide; sequence MKLPLLLALVVCSAVS. Over 17–354 the chain is Extracellular; the sequence is TNLKMVSKRN…LLRKKDLIYK (338 aa). The Ig-like C2-type 1 domain occupies 32–132; sequence IDWSVDLKTY…YCMKVSMSLT (101 aa). Cys53 and Cys116 form a disulfide bridge. N-linked (GlcNAc...) asparagine glycans are attached at residues Asn63, Asn120, Asn136, Asn211, and Asn328. 2 consecutive Ig-like C2-type domains span residues 141–232 and 239–347; these read CYNS…LKVT and PPKP…VLLR. Intrachain disulfides connect Cys162-Cys214 and Cys265-Cys331. A helical transmembrane segment spans residues 355–375; it reads IELAGGLGAIFLLLILLLVVY. At 376-686 the chain is on the cytoplasmic side; sequence KCYNIELMLF…KELSFTSDIW (311 aa). A TIR domain is found at 400 to 556; that stretch reads KEYDAYLSYT…KFWKHLVYEM (157 aa). The active site involves Glu488.

This sequence belongs to the interleukin-1 receptor family. As to expression, detected in fetal brain after day 12.5, in particular in parts of the diencephalon and in the basal plate of the spinal cord. In postnatal brain detected in cerebral cortex, olfactory bulb, in the CA1 region of the hippocampus and in Purkinje cells of the Xth cerebellar lobule.

It localises to the membrane. The catalysed reaction is NAD(+) + H2O = ADP-D-ribose + nicotinamide + H(+). In Mus musculus (Mouse), this protein is X-linked interleukin-1 receptor accessory protein-like 2 (Il1rapl2).